Here is a 154-residue protein sequence, read N- to C-terminus: Large ribosomal subunit protein uL13 (154 aa).

This sequence belongs to the universal ribosomal protein uL13 family. As to quaternary structure, part of the 50S ribosomal subunit.

This protein is one of the early assembly proteins of the 50S ribosomal subunit, although it is not seen to bind rRNA by itself. It is important during the early stages of 50S assembly. The sequence is that of Large ribosomal subunit protein uL13 from Sinorhizobium medicae (strain WSM419) (Ensifer medicae).